Reading from the N-terminus, the 224-residue chain is MQTWKDVIGTEKTQPYFQHILQQVHAARDAGKTIYPPQHDVFNAFKLTEFDQVKVVILGQDPYHGPNQAHGLAFSVLPGIVPPPSLLNIYKELENDIAGFQIPRHGYLVKWAEQGVLLLNTVLTVERGLAHSHANFGWETFTDRVIAALNRHRENLVFLLWGSHAQKKGQFIDRDRHCVLTAPHPSPLSAHRGFLGCHHFSKANNYLQEHKITEIDWQLDTQLS.

The active-site Proton acceptor is the Asp61.

This sequence belongs to the uracil-DNA glycosylase (UDG) superfamily. UNG family.

The protein localises to the cytoplasm. It carries out the reaction Hydrolyzes single-stranded DNA or mismatched double-stranded DNA and polynucleotides, releasing free uracil.. In terms of biological role, excises uracil residues from the DNA which can arise as a result of misincorporation of dUMP residues by DNA polymerase or due to deamination of cytosine. The chain is Uracil-DNA glycosylase from Mannheimia succiniciproducens (strain KCTC 0769BP / MBEL55E).